The chain runs to 122 residues: MIQTESRLEVADNTGAREVLCIKVLGGSKRRYAGIGDIIKVSVKEATPRGRVKKGEIYNAVVVRTAKGVRRQDGSLIKFDGNAAVLLNNKLEPIGTRIFGPVTRELRSERFMKIVSLAPEVL.

The protein belongs to the universal ribosomal protein uL14 family. In terms of assembly, part of the 50S ribosomal subunit. Forms a cluster with proteins L3 and L19. In the 70S ribosome, L14 and L19 interact and together make contacts with the 16S rRNA in bridges B5 and B8.

Binds to 23S rRNA. Forms part of two intersubunit bridges in the 70S ribosome. This chain is Large ribosomal subunit protein uL14, found in Burkholderia lata (strain ATCC 17760 / DSM 23089 / LMG 22485 / NCIMB 9086 / R18194 / 383).